Reading from the N-terminus, the 134-residue chain is Two-component response regulator ORR5 (134 aa).

The Response regulatory domain maps to 16–133 (HVLAVDDSSV…DVSRLCSRVL (118 aa)). Asp66 carries the post-translational modification 4-aspartylphosphate.

Belongs to the ARR family. Type-A subfamily. Post-translationally, two-component system major event consists of a His-to-Asp phosphorelay between a sensor histidine kinase (HK) and a response regulator (RR). In plants, the His-to-Asp phosphorelay involves an additional intermediate named Histidine-containing phosphotransfer protein (HPt). This multistep phosphorelay consists of a His-Asp-His-Asp sequential transfer of a phosphate group between first a His and an Asp of the HK protein, followed by the transfer to a conserved His of the HPt protein and finally the transfer to an Asp in the receiver domain of the RR protein. As to expression, expressed in mature leaves and shoots, and at low levels in roots and flowers.

Functionally, functions as a response regulator involved in His-to-Asp phosphorelay signal transduction system. Phosphorylation of the Asp residue in the receiver domain activates the ability of the protein to promote the transcription of target genes. Type-A response regulators seem to act as negative regulators of the cytokinin signaling. This Oryza sativa subsp. indica (Rice) protein is Two-component response regulator ORR5.